The primary structure comprises 701 residues: Heterodisulfide reductase subunit A-like protein (701 aa).

Residue 152-175 participates in FAD binding; sequence GGGIAGIFAALDIANAGYKVYLVE. The region spanning 239-268 is the 4Fe-4S ferredoxin-type 1 domain; sequence KQTWVDWDLCTGCGACTDVCPPKARVPDEF. The [4Fe-4S] cluster site is built by cysteine 248, cysteine 251, cysteine 254, cysteine 326, cysteine 627, cysteine 630, cysteine 633, cysteine 637, cysteine 660, cysteine 663, cysteine 666, and cysteine 670. 4Fe-4S ferredoxin-type domains lie at 618-647 and 651-680; these read LVSEVDKEKCSGCGICVPLCPYGAITMTKY and MRAEINPALCKGCGVCAAACPSKAIKLHGF.

It belongs to the HdrA family. In terms of assembly, the heterodisulfide reductase is composed of three subunits; HdlA, HdlB and HdlC. It forms a complex with the F420-non-reducing hydrogenase (Mvh), which provides the reducing equivalents to the heterodisulfide reductase. The cofactor is [4Fe-4S] cluster. Requires FAD as cofactor.

It is found in the cytoplasm. In terms of biological role, has oxidoreductase activity. The Hdl and Mvh subunits may together mediate electron transfer from hydrogen to an unidentified electron acceptor on the cytoplasmic side of the membrane. The sequence is that of Heterodisulfide reductase subunit A-like protein (hdlA) from Archaeoglobus profundus (strain DSM 5631 / JCM 9629 / NBRC 100127 / Av18).